The sequence spans 403 residues: Golgin-45 (403 aa).

Positions 1–63 (MEKMTTLKSS…PRKKVSSDSP (63 aa)) are disordered. The short motif at 22–26 (RGAGD) is the Tankyrase-binding motif element. Phosphoserine is present on Ser53. Residues 123–216 (RKELSEVKKV…QLERMSIQCD (94 aa)) adopt a coiled-coil conformation. At Ser356 the chain carries Phosphoserine. The segment at 397–403 (QGELIAL) is essential for interaction with GORASP2.

As to quaternary structure, interacts with GORASP2. Interacts with the GTP-bound form of RAB2, but not with other Golgi Rab proteins. Identified in a complex with RAB2 and GORASP2. ADP-ribosylated by tankyrase TNKS and TNKS2. Poly-ADP-ribosylated protein is recognized by RNF146, followed by ubiquitination. Post-translationally, ubiquitinated by RNF146 when poly-ADP-ribosylated, leading to its degradation.

The protein localises to the golgi apparatus membrane. Its function is as follows. Required for normal Golgi structure and for protein transport from the endoplasmic reticulum (ER) through the Golgi apparatus to the cell surface. The protein is Golgin-45 (Blzf1) of Mus musculus (Mouse).